The following is a 269-amino-acid chain: Formamidopyrimidine-DNA glycosylase (269 aa).

The active-site Schiff-base intermediate with DNA is P2. Catalysis depends on E3, which acts as the Proton donor. K57 serves as the catalytic Proton donor; for beta-elimination activity. DNA contacts are provided by H90, R109, and K150. The FPG-type zinc finger occupies 235–269 (QVYGRAGELCRRCGNVIEIAKHGQRSTFFCRHCQH). The active-site Proton donor; for delta-elimination activity is the R259.

The protein belongs to the FPG family. Monomer. Zn(2+) serves as cofactor.

It carries out the reaction Hydrolysis of DNA containing ring-opened 7-methylguanine residues, releasing 2,6-diamino-4-hydroxy-5-(N-methyl)formamidopyrimidine.. The catalysed reaction is 2'-deoxyribonucleotide-(2'-deoxyribose 5'-phosphate)-2'-deoxyribonucleotide-DNA = a 3'-end 2'-deoxyribonucleotide-(2,3-dehydro-2,3-deoxyribose 5'-phosphate)-DNA + a 5'-end 5'-phospho-2'-deoxyribonucleoside-DNA + H(+). Its function is as follows. Involved in base excision repair of DNA damaged by oxidation or by mutagenic agents. Acts as a DNA glycosylase that recognizes and removes damaged bases. Has a preference for oxidized purines, such as 7,8-dihydro-8-oxoguanine (8-oxoG). Has AP (apurinic/apyrimidinic) lyase activity and introduces nicks in the DNA strand. Cleaves the DNA backbone by beta-delta elimination to generate a single-strand break at the site of the removed base with both 3'- and 5'-phosphates. The protein is Formamidopyrimidine-DNA glycosylase of Yersinia enterocolitica serotype O:8 / biotype 1B (strain NCTC 13174 / 8081).